A 672-amino-acid chain; its full sequence is DNA mismatch repair protein MutL (672 aa).

Residues 443 to 454 (SYTSDSNQYENS) are compositionally biased toward polar residues. Positions 443 to 469 (SYTSDSNQYENSCKSDVDKESKSKTTG) are disordered. The segment covering 455–465 (CKSDVDKESKS) has biased composition (basic and acidic residues).

This sequence belongs to the DNA mismatch repair MutL/HexB family.

Its function is as follows. This protein is involved in the repair of mismatches in DNA. It is required for dam-dependent methyl-directed DNA mismatch repair. May act as a 'molecular matchmaker', a protein that promotes the formation of a stable complex between two or more DNA-binding proteins in an ATP-dependent manner without itself being part of a final effector complex. The chain is DNA mismatch repair protein MutL from Clostridium botulinum (strain Eklund 17B / Type B).